A 156-amino-acid chain; its full sequence is Endoribonuclease YbeY (156 aa).

Residues histidine 122, histidine 126, and histidine 132 each contribute to the Zn(2+) site.

Belongs to the endoribonuclease YbeY family. It depends on Zn(2+) as a cofactor.

It localises to the cytoplasm. In terms of biological role, single strand-specific metallo-endoribonuclease involved in late-stage 70S ribosome quality control and in maturation of the 3' terminus of the 16S rRNA. The sequence is that of Endoribonuclease YbeY from Bacillus cereus (strain ZK / E33L).